The following is a 400-amino-acid chain: Large envelope protein (400 aa).

Met-1 bears the N-acetylmethionine mark. A lipid anchor (N-myristoyl glycine; by host) is attached at Gly-2. The pre-S1 stretch occupies residues 2 to 119 (GGWSSKPRKG…PPLRDTHPQA (118 aa)). The interval 2–174 (GGWSSKPRKG…LSKTGDPVPN (173 aa)) is pre-S. Over 2–181 (GGWSSKPRKG…VPNMENISSG (180 aa)) the chain is Virion surface; in external conformation. Residues 2–253 (GGWSSKPRKG…PGYRWMCLRR (252 aa)) lie on the Intravirion; in internal conformation side of the membrane. Trp-4 is a glycosylation site (N-linked (GlcNAc...) asparagine). Disordered stretches follow at residues 29–50 (QLDPAFKANSDNPDWDLNPHKD) and 85–118 (LTTVPAAPPPASTSRQSGRQPTPLSPPLRDTHPQ). The segment covering 96-106 (STSRQSGRQPT) has biased composition (polar residues). The segment at 120 to 174 (MQWNSTTFHQTLQDPRVRALYFPAGGSSSGTVSPAQNTVSAISSTLSKTGDPVPN) is pre-S2. A helical transmembrane segment spans residues 182-202 (LLGPLLVLQAGFFLLTKILTI). At 203-253 (PQSLDSWWTSLNFLGQTPVCLGQNSQSQISSHSLTCCPPICPGYRWMCLRR) the chain is on the intravirion; in external conformation side. The chain crosses the membrane as a helical span at residues 254–274 (FIIFLCILLLCLIFLLVLLDC). Residues 275–348 (QGMLPVCPLI…WASVRFSWLS (74 aa)) are Virion surface-facing. The N-linked (GlcNAc...) asparagine; by host glycan is linked to Asn-320. A helical transmembrane segment spans residues 349–369 (LLVPFVQWFVGLSPTVWLSVI). At 370 to 375 (WMMWFW) the chain is on the intravirion side. Residues 376–398 (GPSLCNILSPFMPLLPIFFCLWV) form a helical membrane-spanning segment. Topologically, residues 399–400 (YI) are virion surface.

It belongs to the orthohepadnavirus major surface antigen family. Interacts (via its myristoylated pre-S1 region) with the host SLC10A1/NTCP; this interaction is essential for viral entry. As to quaternary structure, in its internal form (Li-HBsAg), interacts with the capsid protein and with the isoform S. Interacts with host chaperone CANX. In terms of assembly, associates with host chaperone CANX through its pre-S2 N glycan; this association may be essential for isoform M proper secretion. Interacts with isoform L. Interacts with the antigens of satellite virus HDV (HDVAgs); this interaction is required for encapsidation of HDV genomic RNA. In terms of processing, isoform M is N-terminally acetylated by host at a ratio of 90%, and N-glycosylated by host at the pre-S2 region. Myristoylated; this modification is essential for its interaction with the host protein SLC10A1/NTCP.

It localises to the virion membrane. The large envelope protein exists in two topological conformations, one which is termed 'external' or Le-HBsAg and the other 'internal' or Li-HBsAg. In its external conformation the protein attaches the virus to cell receptors and thereby initiating infection. This interaction determines the species specificity and liver tropism. This attachment induces virion internalization predominantly through caveolin-mediated endocytosis. The large envelope protein also assures fusion between virion membrane and endosomal membrane. In its internal conformation the protein plays a role in virion morphogenesis and mediates the contact with the nucleocapsid like a matrix protein. Functionally, the middle envelope protein plays an important role in the budding of the virion. It is involved in the induction of budding in a nucleocapsid independent way. In this process the majority of envelope proteins bud to form subviral lipoprotein particles of 22 nm of diameter that do not contain a nucleocapsid. The protein is Large envelope protein of Homo sapiens (Human).